The primary structure comprises 401 residues: Imidazolonepropionase (401 aa).

Positions 70 and 72 each coordinate Fe(3+). Zn(2+) contacts are provided by histidine 70 and histidine 72. Residues arginine 79, tyrosine 142, and histidine 175 each coordinate 4-imidazolone-5-propanoate. Residue tyrosine 142 participates in N-formimidoyl-L-glutamate binding. Histidine 238 is a Fe(3+) binding site. Histidine 238 is a binding site for Zn(2+). Glutamine 241 serves as a coordination point for 4-imidazolone-5-propanoate. Aspartate 313 provides a ligand contact to Fe(3+). Aspartate 313 contacts Zn(2+). Asparagine 315 and glycine 317 together coordinate N-formimidoyl-L-glutamate. Threonine 318 is a 4-imidazolone-5-propanoate binding site.

Belongs to the metallo-dependent hydrolases superfamily. HutI family. It depends on Zn(2+) as a cofactor. Fe(3+) is required as a cofactor.

Its subcellular location is the cytoplasm. The enzyme catalyses 4-imidazolone-5-propanoate + H2O = N-formimidoyl-L-glutamate. The protein operates within amino-acid degradation; L-histidine degradation into L-glutamate; N-formimidoyl-L-glutamate from L-histidine: step 3/3. Catalyzes the hydrolytic cleavage of the carbon-nitrogen bond in imidazolone-5-propanoate to yield N-formimidoyl-L-glutamate. It is the third step in the universal histidine degradation pathway. The polypeptide is Imidazolonepropionase (Acidiphilium cryptum (strain JF-5)).